The primary structure comprises 490 residues: AP-5 complex subunit mu-1 (490 aa).

The MHD domain occupies 206–476 (KPQVSISITE…LISSDYYIWN (271 aa)).

It belongs to the adaptor complexes medium subunit family. Probably part of the adaptor protein complex 5 (AP-5) a tetramer composed of AP5B1, AP5M1, AP5S1 and AP5Z1.

It is found in the cytoplasm. It localises to the cytosol. The protein resides in the late endosome membrane. Its subcellular location is the lysosome membrane. As part of AP-5, a probable fifth adaptor protein complex it may be involved in endosomal transport. The sequence is that of AP-5 complex subunit mu-1 (AP5M1) from Macaca fascicularis (Crab-eating macaque).